The following is a 321-amino-acid chain: Quinol oxidase subunit 2 (321 aa).

The N-terminal stretch at M1–G25 is a signal peptide. The N-palmitoyl cysteine moiety is linked to residue C26. C26 carries S-diacylglycerol cysteine lipidation. 2 helical membrane passes run S49–V69 and T90–P110. A disordered region spans residues Q294–E321. The segment covering S300–E321 has biased composition (basic and acidic residues).

The protein belongs to the cytochrome c oxidase subunit 2 family. In terms of assembly, interacts with FloT.

The protein resides in the cell membrane. It localises to the membrane raft. It carries out the reaction 2 a quinol + O2 = 2 a quinone + 2 H2O. In terms of biological role, catalyzes quinol oxidation with the concomitant reduction of oxygen to water. Major component for energy conversion during vegetative growth. Subunit II transfers the electrons from a quinol to the binuclear center of the catalytic subunit I. The protein is Quinol oxidase subunit 2 (qoxA) of Bacillus subtilis (strain 168).